A 353-amino-acid chain; its full sequence is Glucose import ATP-binding protein GlcV (353 aa).

In terms of domain architecture, ABC transporter spans 4–241 (IIVKNVSKVF…PVSIQVASLI (238 aa)). ATP-binding positions include 40–46 (SGAGKTT), glutamine 89, and glutamate 166.

It belongs to the ABC transporter superfamily. As to quaternary structure, the complex is composed of two ATP-binding proteins (GlcV), two transmembrane proteins (GlcT and GlcU) and a solute-binding protein (GlcS). Forms transient head-to-tail homodimers in the presence of ATP-Mg(2+).

The protein localises to the cell membrane. It carries out the reaction D-glucose(out) + ATP + H2O = D-glucose(in) + ADP + phosphate + H(+). Functionally, part of the ABC transporter complex GlcSTUV involved in glucose uptake. Responsible for energy coupling to the transport system. In vitro, as a free subunit, exhibits a constitutive ATPase activity. The polypeptide is Glucose import ATP-binding protein GlcV (Saccharolobus solfataricus (strain ATCC 35092 / DSM 1617 / JCM 11322 / P2) (Sulfolobus solfataricus)).